The sequence spans 1622 residues: Transient receptor potential cation channel subfamily M member 1 (1622 aa).

5 disordered regions span residues 1 to 25 (MGSM…GSQK), 64 to 95 (PPLP…KHTQ), 450 to 490 (LAPP…EVEE), 618 to 641 (LGME…EEEI), and 822 to 856 (SKEN…HKKQ). The Cytoplasmic segment spans residues 1–875 (MGSMRKMSSS…CEFYNAPIVK (875 aa)). A compositionally biased stretch (low complexity) spans 8 to 25 (SSSFKRGSIKSSTSGSQK). Residues 70–95 (APSTTGEDTKQADTQSGKWSVSKHTQ) show a composition bias toward polar residues. Over residues 472–483 (GRGKGKGKKKGK) the composition is skewed to basic residues. Composition is skewed to basic and acidic residues over residues 823 to 832 (KENEDGKEKE) and 843 to 853 (GSRKGDEENEH). The helical transmembrane segment at 876–896 (FWFYTISYLGYLLLFNYVILV) threads the bilayer. The Extracellular segment spans residues 897–942 (RMDGWPSPQEWIVISYIVSLALEKIREILMSEPGKLSQKIKVWLQE). A helical membrane pass occupies residues 943–963 (YWNITDLVAISMFMVGAILRL). The Cytoplasmic segment spans residues 964 to 973 (QSQPYMGYGR). The helical transmembrane segment at 974–994 (VIYCVDIILWYIRVLDIFGVN) threads the bilayer. At 995–1006 (KYLGPYVMMIGK) the chain is on the extracellular side. A helical transmembrane segment spans residues 1007-1027 (MMIDMLYFVVIMLVVLMSFGV). At 1028–1099 (ARQAILHPEE…CIPGAWLTPA (72 aa)) the chain is on the cytoplasmic side. Residues 1100 to 1120 (LMACYLLVANILLVNLLIAVF) traverse the membrane as a helical segment. N-linked (GlcNAc...) asparagine glycosylation is present at N1121. Over 1121–1150 (NNTFFEVKSISNQVWKFQRYQLIMTFHDRP) the chain is Extracellular. Residues 1151–1171 (VLPPPMIILSHIYIIIMRLSG) traverse the membrane as a helical segment. Over 1172–1622 (RCRKKREGDQ…QEKRSAETEC (451 aa)) the chain is Cytoplasmic. Positions 1224 to 1252 (DERIRVTSERVENMSMRLEEINERENFMK) form a coiled coil. Disordered regions lie at residues 1354 to 1383 (EDAK…RSRL), 1389 to 1408 (LSTE…EFDP), and 1567 to 1622 (CLRS…ETEC). The span at 1613 to 1622 (QEKRSAETEC) shows a compositional bias: basic and acidic residues.

It belongs to the transient receptor (TC 1.A.4) family. LTrpC subfamily. TRPM1 sub-subfamily. As to quaternary structure, homodimer. Interacts with TRPM3; the interaction results in the formation of a heteromultimeric cation channel complex that are functionally different from the homomeric channels. Interacts with GPR179. Associates with both guanine nucleotide-binding proteins G(o) and beta-gamma G protein dimer; implicated in directly regulating TRPM1 channel open-state. As to expression, expressed in the retina where it localizes on dendritic tips of ON bipolar cells. Specifically, it is expressed in retinal bipolar cells (BPCs) of the ON subtype. Not detected in brain, lung, liver, heart, kidney, spleen or small intestine. Also expressed at high levels in poorly metastatic variants of B16 melanoma and at much reduced levels in highly metastatic variants of B16 melanoma.

It localises to the cell membrane. Its subcellular location is the endoplasmic reticulum membrane. The protein localises to the cell projection. The protein resides in the axon. The enzyme catalyses Ca(2+)(in) = Ca(2+)(out). It catalyses the reaction Mg(2+)(in) = Mg(2+)(out). It carries out the reaction Mn(2+)(in) = Mn(2+)(out). The catalysed reaction is Ni(2+)(in) = Ni(2+)(out). Inhibited by extracellular zinc ions. Inhibited by intracellular Mg(2+). Activated by the neuroactive steroid pregnenolone sulfate. Negatively regulated by activation of GRM6 receptors in the ON-bipolar cells. Constitutively open nonselective divalent cation-conducting channels which mediate the influx of Ca(2+), Mg(2+), Mn(2+), Ba(2+), and Ni(2+) into the cytoplasm, leading to membrane depolarization. Impermeable to zinc ions. In addition, forms heteromultimeric ion channels with TRPM3 which are permeable for calcium and zinc ions. Plays an essential role for the depolarizing photoresponse of retinal ON bipolar cells. In the dark, tonic release of glutamate activates the G-protein coupled receptor for glutamate (GRM6), its activation induces the release of G(o) and the beta-gamma G protein dimer. Both subunits can interact and inactivate the TRPM1 channel. A light onset, induces decrease in glutamate release and deactivation of GRM6 leading to channel opening and membrane depolarization. May play a role in metastasis suppression. This chain is Transient receptor potential cation channel subfamily M member 1, found in Mus musculus (Mouse).